A 291-amino-acid chain; its full sequence is Beta-lactamase Toho-1 (291 aa).

An N-terminal signal peptide occupies residues 1-29 (MMTQSIRRSMLTVMATLPLLFSSATLHAQ). Residue serine 73 is the Acyl-ester intermediate of the active site. Position 237 to 239 (237 to 239 (KTG)) interacts with substrate.

It belongs to the class-A beta-lactamase family. Monomer.

It catalyses the reaction a beta-lactam + H2O = a substituted beta-amino acid. Its function is as follows. Has strong cefotaxime-hydrolyzing activity. The protein is Beta-lactamase Toho-1 (bla) of Escherichia coli.